The following is a 294-amino-acid chain: N-acetylmuramic acid 6-phosphate etherase (294 aa).

An SIS domain is found at 54–217; sequence VIKSFEEEGR…STASMIGVGK (164 aa). Residue E82 is the Proton donor of the active site. E113 is a catalytic residue.

The protein belongs to the GCKR-like family. MurNAc-6-P etherase subfamily. As to quaternary structure, homodimer.

It carries out the reaction N-acetyl-D-muramate 6-phosphate + H2O = N-acetyl-D-glucosamine 6-phosphate + (R)-lactate. The protein operates within amino-sugar metabolism; N-acetylmuramate degradation. Its function is as follows. Specifically catalyzes the cleavage of the D-lactyl ether substituent of MurNAc 6-phosphate, producing GlcNAc 6-phosphate and D-lactate. This Bacillus cereus (strain ATCC 10987 / NRS 248) protein is N-acetylmuramic acid 6-phosphate etherase.